A 435-amino-acid polypeptide reads, in one-letter code: Bifunctional protein GlmU (435 aa).

A pyrophosphorylase region spans residues 1–224; it reads MNDTSIIILA…EQNFMGINDK (224 aa). Residues 9–12, K23, Q75, and 82–83 contribute to the UDP-N-acetyl-alpha-D-glucosamine site; these read LAAG and GT. D103 lines the Mg(2+) pocket. Residues G136, E150, N165, and N222 each contribute to the UDP-N-acetyl-alpha-D-glucosamine site. N222 provides a ligand contact to Mg(2+). The tract at residues 225 to 245 is linker; that stretch reads FQLSVAEKIMQDEIKQDLMKA. The interval 246–435 is N-acetyltransferase; it reads GVLMRLPESI…KFFGKNNAEK (190 aa). UDP-N-acetyl-alpha-D-glucosamine contacts are provided by R309 and K326. The active-site Proton acceptor is the H337. Residues Y340 and N351 each contribute to the UDP-N-acetyl-alpha-D-glucosamine site. Residues 360–361, S379, A397, and R414 each bind acetyl-CoA; that span reads NY.

In the N-terminal section; belongs to the N-acetylglucosamine-1-phosphate uridyltransferase family. This sequence in the C-terminal section; belongs to the transferase hexapeptide repeat family. Homotrimer. Mg(2+) serves as cofactor.

The protein resides in the cytoplasm. The enzyme catalyses alpha-D-glucosamine 1-phosphate + acetyl-CoA = N-acetyl-alpha-D-glucosamine 1-phosphate + CoA + H(+). It catalyses the reaction N-acetyl-alpha-D-glucosamine 1-phosphate + UTP + H(+) = UDP-N-acetyl-alpha-D-glucosamine + diphosphate. Its pathway is nucleotide-sugar biosynthesis; UDP-N-acetyl-alpha-D-glucosamine biosynthesis; N-acetyl-alpha-D-glucosamine 1-phosphate from alpha-D-glucosamine 6-phosphate (route II): step 2/2. It functions in the pathway nucleotide-sugar biosynthesis; UDP-N-acetyl-alpha-D-glucosamine biosynthesis; UDP-N-acetyl-alpha-D-glucosamine from N-acetyl-alpha-D-glucosamine 1-phosphate: step 1/1. The protein operates within bacterial outer membrane biogenesis; LPS lipid A biosynthesis. Its function is as follows. Catalyzes the last two sequential reactions in the de novo biosynthetic pathway for UDP-N-acetylglucosamine (UDP-GlcNAc). The C-terminal domain catalyzes the transfer of acetyl group from acetyl coenzyme A to glucosamine-1-phosphate (GlcN-1-P) to produce N-acetylglucosamine-1-phosphate (GlcNAc-1-P), which is converted into UDP-GlcNAc by the transfer of uridine 5-monophosphate (from uridine 5-triphosphate), a reaction catalyzed by the N-terminal domain. The protein is Bifunctional protein GlmU of Campylobacter curvus (strain 525.92).